Consider the following 238-residue polypeptide: Purine nucleoside phosphorylase DeoD-type (238 aa).

His-5 contacts a purine D-ribonucleoside. Residues Gly-21, Arg-25, Arg-44, and 88 to 91 (RVGS) each bind phosphate. A purine D-ribonucleoside-binding positions include 180 to 182 (EME) and 204 to 205 (SD). The active-site Proton donor is the Asp-205.

This sequence belongs to the PNP/UDP phosphorylase family. In terms of assembly, homohexamer; trimer of homodimers.

It carries out the reaction a purine D-ribonucleoside + phosphate = a purine nucleobase + alpha-D-ribose 1-phosphate. The catalysed reaction is a purine 2'-deoxy-D-ribonucleoside + phosphate = a purine nucleobase + 2-deoxy-alpha-D-ribose 1-phosphate. Its function is as follows. Catalyzes the reversible phosphorolytic breakdown of the N-glycosidic bond in the beta-(deoxy)ribonucleoside molecules, with the formation of the corresponding free purine bases and pentose-1-phosphate. This chain is Purine nucleoside phosphorylase DeoD-type, found in Proteus mirabilis (strain HI4320).